A 340-amino-acid polypeptide reads, in one-letter code: Methionine import ATP-binding protein MetN 1 (340 aa).

The 241-residue stretch at 2 to 242 folds into the ABC transporter domain; it reads IRLENVSVDF…PQHAYTKQLV (241 aa). 39 to 46 contributes to the ATP binding site; it reads GTSGAGKS.

The protein belongs to the ABC transporter superfamily. Methionine importer (TC 3.A.1.24) family. In terms of assembly, the complex is composed of two ATP-binding proteins (MetN), two transmembrane proteins (MetI) and a solute-binding protein (MetQ).

Its subcellular location is the cell inner membrane. It catalyses the reaction L-methionine(out) + ATP + H2O = L-methionine(in) + ADP + phosphate + H(+). The enzyme catalyses D-methionine(out) + ATP + H2O = D-methionine(in) + ADP + phosphate + H(+). Its function is as follows. Part of the ABC transporter complex MetNIQ involved in methionine import. Responsible for energy coupling to the transport system. The chain is Methionine import ATP-binding protein MetN 1 from Pectobacterium atrosepticum (strain SCRI 1043 / ATCC BAA-672) (Erwinia carotovora subsp. atroseptica).